The following is a 1249-amino-acid chain: Protein lingerer (1249 aa).

The segment at 1 to 66 (MSTQTRSGGG…VVKAKQPTAE (66 aa)) is disordered. Composition is skewed to gly residues over residues 7-30 (SGGG…GAAG) and 38-50 (GSTG…GAGG). Residues 84–124 (KIQEKIQSLMETTQRSEEEVCCALQECDSDLDRAVIFLLET) form the UBA domain. Disordered stretches follow at residues 132–312 (TTSK…LKPE), 350–375 (SAGA…ASNV), 454–506 (MPPM…PPTT), 549–579 (YAAA…AVEM), 616–717 (TTGT…TSVS), 738–922 (PYGQ…SLPI), 1016–1042 (GRFT…TGSG), 1124–1149 (QQQS…APSM), 1164–1186 (KQSF…AGTT), and 1211–1249 (QNMH…TGPN). Gly residues predominate over residues 186–209 (NRGGSGNQRSGGPGRGGRAGGYRD). Residues 210–227 (GGGDRDRDRDRNGYDKGG) are compositionally biased toward basic and acidic residues. Gly residues-rich tracts occupy residues 228-240 (EGGG…GGDG) and 248-269 (DGPG…GGPR). The segment covering 350–369 (SAGAGAQQQQSQQSTQTGVP) has biased composition (low complexity). Residues 457–494 (MNTSSSLSAEQSQYFSTLSSQNSNLQPTPSAVGFQQQP) are compositionally biased toward polar residues. Composition is skewed to low complexity over residues 549 to 559 (YAAAATQQPPV), 616 to 639 (TTGT…PATV), and 647 to 664 (QSQL…APQQ). Residues 678–705 (ASSQIMPGQGTTEALSSQNDGLANSYSR) are compositionally biased toward polar residues. Over residues 706-717 (TNASGSVSTSVS) the composition is skewed to low complexity. 2 stretches are compositionally biased toward polar residues: residues 738-769 (PYGQ…TASY) and 777-809 (GYNN…NVNA). Positions 811 to 861 (QPPSSSVTNNVVPNNNTGNSVGGVSNQSNLPVNNNAVNSSSNNNAGGYLSS) are enriched in low complexity. Positions 862–873 (QYPVSQTSSAFP) are enriched in polar residues. 3 stretches are compositionally biased toward low complexity: residues 874–884 (SQQNYQNSSQN), 892–922 (NSNT…SLPI), and 1023–1034 (NNSSPVSNVPSS). Residues 1124-1138 (QQQSKGQTVANQQSG) are compositionally biased toward polar residues. The span at 1216-1249 (DSNSSGQRPQNNNQGKTASKQQGYSASTYWTGPN) shows a compositional bias: polar residues.

It localises to the cytoplasm. Functionally, acts in the nervous system to mediate the control of copulatory organs during courtship. The chain is Protein lingerer from Anopheles gambiae (African malaria mosquito).